A 380-amino-acid chain; its full sequence is MLYFLLQPLARDVRLFNLLNYITFRAAAAFVTALLVSFILGPAIIRRLRAMAVHQVVREGTPDTHAGKGTTPTMGGLIILAATFAPVLLWSRLSNRYVLLAMAVTAWMGVIGFLDDYLKLKQKREGKKNEGLVERYKLAGQVLCGLGLGAYLLLSPISTLPGASTTLPFFKYVLVVPAVAWAAWLYIPWVTFILTGVSNAVNLTDGLDGLSSGLVAIAVLTLGLFAYVLGRVDTSAYLQVFYLRGAGELTVFCAAVVGACIGFLWYNAHPAQVFMGDTGSLALGGAVGAIAILLKSEFLLLFVGAVFFAETVSVILQRTVFKYRLRRYGREYAQKHRVFRRAPLHHHFEMMGWPETQVVVRFWIIGILCAILALSTLKLR.

Transmembrane regions (helical) follow at residues 25–45 (RAAA…PAII), 70–90 (TTPT…VLLW), 98–118 (VLLA…DDYL), 142–162 (VLCG…TLPG), 173–193 (VLVV…VTFI), 209–229 (GLSS…AYVL), 245–265 (GAGE…GFLW), 272–294 (QVFM…AILL), and 357–377 (QVVV…LSTL).

The protein belongs to the glycosyltransferase 4 family. MraY subfamily. The cofactor is Mg(2+).

It localises to the cell inner membrane. It catalyses the reaction UDP-N-acetyl-alpha-D-muramoyl-L-alanyl-gamma-D-glutamyl-meso-2,6-diaminopimeloyl-D-alanyl-D-alanine + di-trans,octa-cis-undecaprenyl phosphate = di-trans,octa-cis-undecaprenyl diphospho-N-acetyl-alpha-D-muramoyl-L-alanyl-D-glutamyl-meso-2,6-diaminopimeloyl-D-alanyl-D-alanine + UMP. The protein operates within cell wall biogenesis; peptidoglycan biosynthesis. Catalyzes the initial step of the lipid cycle reactions in the biosynthesis of the cell wall peptidoglycan: transfers peptidoglycan precursor phospho-MurNAc-pentapeptide from UDP-MurNAc-pentapeptide onto the lipid carrier undecaprenyl phosphate, yielding undecaprenyl-pyrophosphoryl-MurNAc-pentapeptide, known as lipid I. The protein is Phospho-N-acetylmuramoyl-pentapeptide-transferase of Gemmatimonas aurantiaca (strain DSM 14586 / JCM 11422 / NBRC 100505 / T-27).